The chain runs to 308 residues: 1D-myo-inositol 2-acetamido-2-deoxy-alpha-D-glucopyranoside deacetylase (308 aa).

Positions 13, 16, and 147 each coordinate Zn(2+).

The protein belongs to the MshB deacetylase family. Zn(2+) is required as a cofactor.

The enzyme catalyses 1D-myo-inositol 2-acetamido-2-deoxy-alpha-D-glucopyranoside + H2O = 1D-myo-inositol 2-amino-2-deoxy-alpha-D-glucopyranoside + acetate. Its function is as follows. Catalyzes the deacetylation of 1D-myo-inositol 2-acetamido-2-deoxy-alpha-D-glucopyranoside (GlcNAc-Ins) in the mycothiol biosynthesis pathway. This chain is 1D-myo-inositol 2-acetamido-2-deoxy-alpha-D-glucopyranoside deacetylase, found in Mycobacterium leprae (strain Br4923).